Here is a 179-residue protein sequence, read N- to C-terminus: Ribosomal RNA small subunit methyltransferase G (179 aa).

S-adenosyl-L-methionine-binding positions include G54, F59, 105-106 (IE), and R121.

This sequence belongs to the methyltransferase superfamily. RNA methyltransferase RsmG family.

Its subcellular location is the cytoplasm. The catalysed reaction is guanosine(527) in 16S rRNA + S-adenosyl-L-methionine = N(7)-methylguanosine(527) in 16S rRNA + S-adenosyl-L-homocysteine. Its function is as follows. Specifically methylates the N7 position of guanine in position 527 of 16S rRNA. This is Ribosomal RNA small subunit methyltransferase G from Helicobacter bizzozeronii.